The chain runs to 1250 residues: Ras-associated and pleckstrin homology domains-containing protein 1 (1250 aa).

The residue at position 1 (M1) is an N-acetylmethionine. Acidic residues predominate over residues M1 to D23. Positions M1–K26 are disordered. Residues S5, S17, S54, S150, S192, S203, and S205 each carry the phosphoserine modification. Residues T179–S217 are disordered. The span at H202 to S217 shows a compositional bias: low complexity. In terms of domain architecture, Ras-associating spans K269 to E355. The region spanning V396–Y505 is the PH domain. Y426 and Y456 each carry phosphotyrosine; by ABL1. The segment covering K535–S551 has biased composition (low complexity). Disordered stretches follow at residues K535–Q570, E588–M663, N675–N1036, A1050–Q1162, and K1176–W1250. The segment covering N552–Q570 has biased composition (polar residues). Basic and acidic residues predominate over residues E588 to S597. The residue at position 610 (S610) is a Phosphoserine. Residues P624–P650 show a composition bias toward pro residues. Positions S651–P662 are enriched in low complexity. Pro residues-rich tracts occupy residues G707–P721 and P760–P781. A compositionally biased stretch (low complexity) spans T791–A802. Composition is skewed to pro residues over residues P803 to K814 and Y823 to L840. S827 carries the post-translational modification Phosphoserine. At T830 the chain carries Phosphothreonine. A phosphoserine mark is found at S845, S853, and S894. A compositionally biased stretch (pro residues) spans I909–S947. Over residues P948 to G968 the composition is skewed to low complexity. S965 is modified (phosphoserine). T974 carries the phosphothreonine modification. Positions Q976–G986 are enriched in polar residues. 2 positions are modified to phosphoserine: S996 and S1012. Composition is skewed to pro residues over residues L1018 to P1027 and P1065 to E1088. Composition is skewed to polar residues over residues T1131 to M1144 and V1151 to V1161. At S1183 the chain carries Phosphoserine. Y1226 carries the post-translational modification Phosphotyrosine; by ABL1. A compositionally biased stretch (basic and acidic residues) spans P1238–W1250.

This sequence belongs to the MRL family. Interacts with EVL and VASP and targets them to the leading edge. Interacts (via Ras associating and PH domains) with RAC1. As to expression, isoform RMO1-RAPH1 is ubiquitously expressed with highest levels in brain, heart, ovary and developing embryo. Isoform RMO1 is widely expressed with highest levels in liver. Low expression in B-cells.

It is found in the cell membrane. Its subcellular location is the cell projection. The protein localises to the lamellipodium. The protein resides in the filopodium. It localises to the cytoplasm. It is found in the cytoskeleton. Mediator of localized membrane signals. Implicated in the regulation of lamellipodial dynamics. Negatively regulates cell adhesion. This is Ras-associated and pleckstrin homology domains-containing protein 1 (RAPH1) from Homo sapiens (Human).